Consider the following 454-residue polypeptide: C4-dicarboxylate transport protein (454 aa).

Helical transmembrane passes span V33 to G53, L66 to M86, I101 to V121, E148 to A168, G170 to G190, L210 to I230, M243 to V263, L354 to I374, and A377 to I397.

Belongs to the dicarboxylate/amino acid:cation symporter (DAACS) (TC 2.A.23) family.

The protein resides in the cell inner membrane. Functionally, responsible for the transport of dicarboxylates such as succinate, fumarate, and malate from the periplasm across the membrane. This Sinorhizobium medicae (strain WSM419) (Ensifer medicae) protein is C4-dicarboxylate transport protein.